Consider the following 1072-residue polypeptide: MGIPAAFRWLSTKYPKIISPVIEDQPITMPDGTVIPVDATKPNPNGEEFDNLYLDMNGIVHPCSHPEDRPAPKDEEEMMVEVFKYTDRVVNMVRPRKLLMIAVDGVAPRAKMNQQRSRRFRAAREAMEKEEDKQKFVELLKKQNGKPQEEEPVEVVVKKAFDSNSITPGTPFMDILAASLRYWCSYKLNTDPAWANIKVIISDATVPGEGEHKIMEFVRSQRGSPNHDPNTRHVIYGLDADLIMLGLATHEPHFRVLREDVFAQDSRPRLCKICGQKGHDAMNCKGEAKEKNGEFDEKDAVVPLKPFIWLHVSILREYLAIELDVPGLPFQFNLERAIDDWVFMCFFVGNDFLPHLPALEIRENGIDTLTAIWKDNLPVMGGYLTKDGHADLERVQYIMAGLAKQEDAIFRRRKETEDRREAGFKRRKLADEARQRRAQGSRQIRQAAENSGPPAGFSFHKINEFPGKAPQPSITHDMVVNRQAVDQANVANKSAASVLKDQIKSMMAQGTSTPENGAESTETPAETAAAAPATEEQAAPPAALGKRKAELIEDAVAGPEASSTEVTEISESDAEPTDSVRLWEEGYADRYYEQKFKVDRKDIDFRHKVGRAYAEGLAWVLEYYFQGCPSWEWFYPYHYAPFAADFVDLGKMEIKFEKGRISRPFEQLMSVLPAASRHAIPEVFHSLMLEETSEIRHFYPDDFEIDLNGKKMAWQGVALLPFIDMPRLLAAMETKSHLLSPEDHLRNAPGKDYLLLSDSHPTLYDHITSQFYSKKQGTTKFELDPTKSAGLSGLVEKIDGYVPHGSLVYPLSRNSMPDVDYDRSLMVHYFFPDCSHTHKSMLLRGVQMPTPALTRSDIDILKGKASRSGRSYGGVPLSNKNYSGRNEPINYGPGGGQQGGRGRGGYQGGGGRGGGRGGYGGNGGGYQANGGGYYNGGNNGGGGGGYGGQPRDSYGPPPGWQPPPPPGLAGFGVGPPPPPPGAAYGGAPGGAGYGGYGSSRGGYQDNRYALPPPPPQAYQAQGQQYGQGGSRGGYQGQGNQYRGPPRQDRGYDNRGGYRGGGYRGGGDNRGYR.

Residues 118-144 (RRFRAAREAMEKEEDKQKFVELLKKQN) are a coiled coil. The CCHC-type zinc-finger motif lies at 269–286 (RLCKICGQKGHDAMNCKG). Over residues 414–435 (KETEDRREAGFKRRKLADEARQ) the composition is skewed to basic and acidic residues. Disordered regions lie at residues 414–459 (KETE…GFSF), 509–577 (QGTS…AEPT), 865–911 (ASRS…GGGG), and 943–1072 (GGGY…RGYR). Over residues 518 to 543 (AESTETPAETAAAAPATEEQAAPPAA) the composition is skewed to low complexity. The segment covering 892–911 (GPGGGQQGGRGRGGYQGGGG) has biased composition (gly residues). Residues 955–967 (GPPPGWQPPPPPG) show a composition bias toward pro residues. Gly residues-rich tracts occupy residues 983-1000 (AYGGAPGGAGYGGYGSSR), 1025-1036 (YGQGGSRGGYQG), and 1056-1072 (GYRGGGYRGGGDNRGYR).

It belongs to the 5'-3' exonuclease family. XRN2/RAT1 subfamily. Interacts with rai1; the interaction is direct, stabilizes exr-1 protein structure and may stimulate its exoribonuclease activity. The interaction also stimulates rai1 pyrophosphohydrolase activity, probably by recruiting it to mRNA substrates.

It is found in the nucleus. In terms of biological role, possesses 5'-&gt;3' exoribonuclease activity. Required for the processing of nuclear mRNA and rRNA precursors. May promote the termination of transcription by RNA polymerase II. Essential for vegetative cell growth and chromosome segregation. The chain is 5'-3' exoribonuclease 2 (exr-1) from Neurospora crassa (strain ATCC 24698 / 74-OR23-1A / CBS 708.71 / DSM 1257 / FGSC 987).